The primary structure comprises 265 residues: S-adenosylmethionine decarboxylase proenzyme (265 aa).

Catalysis depends on S114, which acts as the Schiff-base intermediate with substrate; via pyruvic acid. Pyruvic acid (Ser); by autocatalysis is present on S114. The Proton acceptor; for processing activity role is filled by H119. C142 acts as the Proton donor; for catalytic activity in catalysis.

This sequence belongs to the prokaryotic AdoMetDC family. Type 2 subfamily. As to quaternary structure, heterooctamer of four alpha and four beta chains arranged as a tetramer of alpha/beta heterodimers. The cofactor is pyruvate. Post-translationally, is synthesized initially as an inactive proenzyme. Formation of the active enzyme involves a self-maturation process in which the active site pyruvoyl group is generated from an internal serine residue via an autocatalytic post-translational modification. Two non-identical subunits are generated from the proenzyme in this reaction, and the pyruvate is formed at the N-terminus of the alpha chain, which is derived from the carboxyl end of the proenzyme. The post-translation cleavage follows an unusual pathway, termed non-hydrolytic serinolysis, in which the side chain hydroxyl group of the serine supplies its oxygen atom to form the C-terminus of the beta chain, while the remainder of the serine residue undergoes an oxidative deamination to produce ammonia and the pyruvoyl group blocking the N-terminus of the alpha chain.

The enzyme catalyses S-adenosyl-L-methionine + H(+) = S-adenosyl 3-(methylsulfanyl)propylamine + CO2. Its pathway is amine and polyamine biosynthesis; S-adenosylmethioninamine biosynthesis; S-adenosylmethioninamine from S-adenosyl-L-methionine: step 1/1. In terms of biological role, catalyzes the decarboxylation of S-adenosylmethionine to S-adenosylmethioninamine (dcAdoMet), the propylamine donor required for the synthesis of the polyamines spermine and spermidine from the diamine putrescine. In Buchnera aphidicola subsp. Acyrthosiphon pisum (strain APS) (Acyrthosiphon pisum symbiotic bacterium), this protein is S-adenosylmethionine decarboxylase proenzyme.